We begin with the raw amino-acid sequence, 632 residues long: tRNA uridine 5-carboxymethylaminomethyl modification enzyme MnmG (632 aa).

Residues Gly15 to Gly20, Ile127, and Ser182 each bind FAD. Gly276–Phe290 lines the NAD(+) pocket. Residue Gln373 participates in FAD binding.

Belongs to the MnmG family. In terms of assembly, homodimer. Heterotetramer of two MnmE and two MnmG subunits. FAD serves as cofactor.

It localises to the cytoplasm. Its function is as follows. NAD-binding protein involved in the addition of a carboxymethylaminomethyl (cmnm) group at the wobble position (U34) of certain tRNAs, forming tRNA-cmnm(5)s(2)U34. In Streptococcus pyogenes serotype M1, this protein is tRNA uridine 5-carboxymethylaminomethyl modification enzyme MnmG.